We begin with the raw amino-acid sequence, 325 residues long: Probable transcription factor At4g01260 (325 aa).

The interval 1 to 98 is disordered; the sequence is MAPKQLKKIE…SMGEEDVKKK (98 aa). 2 stretches are compositionally biased toward low complexity: residues 23–32 and 49–69; these read ASSGESATSG and KPVVVSKPSGSKTTTKPESST. The segment covering 73 to 83 has biased composition (basic and acidic residues); that stretch reads RSFEKTDEMSK.

It belongs to the GeBP family.

The sequence is that of Probable transcription factor At4g01260 from Arabidopsis thaliana (Mouse-ear cress).